The primary structure comprises 163 residues: Methyl-CpG-binding domain-containing protein 3 (163 aa).

The segment at 6-56 (TTLIDSYAAQCWKCLKVRSIESQEDYEEIRSKTLEKFFECKRCEEPGDMVM) adopts a CW-type zinc-finger fold. Residues 65 to 137 (WFQDEHSIPK…EEVSFAAPKR (73 aa)) form the MBD domain. The tract at residues 140-163 (LKKKPVDSHSSSRNTEEDGVSRDA) is disordered. The span at 153–163 (NTEEDGVSRDA) shows a compositional bias: basic and acidic residues.

It localises to the nucleus. Functionally, probable transcriptional regulator. The sequence is that of Methyl-CpG-binding domain-containing protein 3 (MBD3) from Arabidopsis thaliana (Mouse-ear cress).